The following is a 1387-amino-acid chain: Kinesin-like protein KIF15 (1387 aa).

Residues 1 to 23 (MAPGCKSELRNVTNSHSNQPSNE) are disordered. A compositionally biased stretch (polar residues) spans 10 to 22 (RNVTNSHSNQPSN). One can recognise a Kinesin motor domain in the interval 26 to 363 (AIKVFVRIRP…LNFAQRAKLI (338 aa)). 109–116 (GQTGSGKT) contacts ATP. The stretch at 368 to 1132 (VVNEDTQGNV…LKMRQLEHVM (765 aa)) forms a coiled coil. Phosphoserine is present on serine 568. N6-acetyllysine is present on lysine 1009. Phosphoserine occurs at positions 1141 and 1169.

This sequence belongs to the TRAFAC class myosin-kinesin ATPase superfamily. Kinesin family. KLP2 subfamily. In terms of assembly, interacts with MKI67 and TPX2. Expressed in brain (neurons in the external germinal layer of the cerebellum and in ventricular zones) (at protein level). Expressed in spleen and testis.

It is found in the cytoplasm. The protein resides in the cytoskeleton. Its subcellular location is the spindle. Plus-end directed kinesin-like motor enzyme involved in mitotic spindle assembly. This is Kinesin-like protein KIF15 (Kif15) from Mus musculus (Mouse).